The primary structure comprises 392 residues: Phosphoglycerate kinase (392 aa).

Substrate-binding positions include 21 to 23 (DFN), Arg36, 59 to 62 (HLGR), Arg118, and Arg151. ATP is bound by residues Lys202, Glu321, and 347–350 (GGDS).

It belongs to the phosphoglycerate kinase family. Monomer.

It is found in the cytoplasm. It carries out the reaction (2R)-3-phosphoglycerate + ATP = (2R)-3-phospho-glyceroyl phosphate + ADP. It participates in carbohydrate degradation; glycolysis; pyruvate from D-glyceraldehyde 3-phosphate: step 2/5. The protein is Phosphoglycerate kinase of Symbiobacterium thermophilum (strain DSM 24528 / JCM 14929 / IAM 14863 / T).